The chain runs to 245 residues: 5'-nucleotidase SurE (245 aa).

Positions 8, 9, 39, and 91 each coordinate a divalent metal cation.

Belongs to the SurE nucleotidase family. It depends on a divalent metal cation as a cofactor.

The protein localises to the cytoplasm. The catalysed reaction is a ribonucleoside 5'-phosphate + H2O = a ribonucleoside + phosphate. Its function is as follows. Nucleotidase that shows phosphatase activity on nucleoside 5'-monophosphates. The protein is 5'-nucleotidase SurE of Herminiimonas arsenicoxydans.